We begin with the raw amino-acid sequence, 131 residues long: Large ribosomal subunit protein bL17 (131 aa).

It belongs to the bacterial ribosomal protein bL17 family. Part of the 50S ribosomal subunit. Contacts protein L32.

The protein is Large ribosomal subunit protein bL17 of Nitrosospira multiformis (strain ATCC 25196 / NCIMB 11849 / C 71).